Here is a 288-residue protein sequence, read N- to C-terminus: N-acetylneuraminate lyase (288 aa).

Positions 44 and 45 each coordinate aceneuramate. The active-site Proton donor is the Y133. K161 serves as the catalytic Schiff-base intermediate with substrate. T163, G185, D187, E188, and S204 together coordinate aceneuramate.

The protein belongs to the DapA family. NanA subfamily. In terms of assembly, homotetramer.

It localises to the cytoplasm. The enzyme catalyses aceneuramate = aldehydo-N-acetyl-D-mannosamine + pyruvate. It participates in amino-sugar metabolism; N-acetylneuraminate degradation; D-fructose 6-phosphate from N-acetylneuraminate: step 1/5. Its function is as follows. Catalyzes the reversible aldol cleavage of N-acetylneuraminic acid (sialic acid; Neu5Ac) to form pyruvate and N-acetylmannosamine (ManNAc) via a Schiff base intermediate. This is N-acetylneuraminate lyase from Clostridium perfringens (strain SM101 / Type A).